The following is a 536-amino-acid chain: Membrane protein insertase YidC (536 aa).

The helical transmembrane segment at 14–34 threads the bilayer; sequence ILIATAISLLFFIPYSYFFAP. The segment at 43–69 is disordered; sequence STSMERAEQQAAPQTSSSPKEGQVSSV. Polar residues predominate over residues 53–68; it reads AAPQTSSSPKEGQVSS. 5 helical membrane-spanning segments follow: residues 312–332, 339–359, 401–421, 436–456, and 484–504; these read VVEY…LDWL, WGWA…PLTY, GANP…FFAI, WILW…PILM, and PLIF…YWFV.

The protein belongs to the OXA1/ALB3/YidC family. Type 1 subfamily. In terms of assembly, interacts with the Sec translocase complex via SecD. Specifically interacts with transmembrane segments of nascent integral membrane proteins during membrane integration.

It localises to the cell inner membrane. Functionally, required for the insertion and/or proper folding and/or complex formation of integral membrane proteins into the membrane. Involved in integration of membrane proteins that insert both dependently and independently of the Sec translocase complex, as well as at least some lipoproteins. Aids folding of multispanning membrane proteins. The polypeptide is Membrane protein insertase YidC (Wolinella succinogenes (strain ATCC 29543 / DSM 1740 / CCUG 13145 / JCM 31913 / LMG 7466 / NCTC 11488 / FDC 602W) (Vibrio succinogenes)).